Here is a 373-residue protein sequence, read N- to C-terminus: Enoyl-[acyl-carrier-protein] reductase, mitochondrial (373 aa).

Residues 1-53 (MLVSQRVTGARARAPQLAGLLEAWYRHGRTTSSYSALSEPSRVRALVYGNHGD) constitute a mitochondrion transit peptide. N6-acetyllysine; alternate is present on Lys61. The residue at position 61 (Lys61) is an N6-succinyllysine; alternate. Tyr94 serves as the catalytic Proton donor. Residues Asn167, 193–196 (NSGV), and 216–218 (RDR) contribute to the NADP(+) site. Lys252 and Lys267 each carry N6-acetyllysine; alternate. N6-succinyllysine; alternate occurs at positions 252 and 267. NADP(+) contacts are provided by residues 285-288 (YGGM) and 310-312 (FWL). The residue at position 316 (Lys316) is an N6-succinyllysine. NADP(+) is bound at residue Lys368.

The protein belongs to the zinc-containing alcohol dehydrogenase family. Quinone oxidoreductase subfamily. As to quaternary structure, homodimer. Expressed in Purkinje cells (at protein level).

The protein resides in the mitochondrion. It carries out the reaction a 2,3-saturated acyl-[ACP] + NADP(+) = a (2E)-enoyl-[ACP] + NADPH + H(+). The enzyme catalyses (2E)-butenoyl-[ACP] + NADPH + H(+) = butanoyl-[ACP] + NADP(+). It catalyses the reaction (2E)-hexenoyl-[ACP] + NADPH + H(+) = hexanoyl-[ACP] + NADP(+). The catalysed reaction is (2E)-octenoyl-[ACP] + NADPH + H(+) = octanoyl-[ACP] + NADP(+). It carries out the reaction (2E)-decenoyl-[ACP] + NADPH + H(+) = decanoyl-[ACP] + NADP(+). The enzyme catalyses (2E)-dodecenoyl-[ACP] + NADPH + H(+) = dodecanoyl-[ACP] + NADP(+). It catalyses the reaction (2E)-tetradecenoyl-[ACP] + NADPH + H(+) = tetradecanoyl-[ACP] + NADP(+). The catalysed reaction is (2E)-hexadecenoyl-[ACP] + NADPH + H(+) = hexadecanoyl-[ACP] + NADP(+). In terms of biological role, catalyzes the NADPH-dependent reduction of trans-2-enoyl thioesters in mitochondrial fatty acid synthesis (fatty acid synthesis type II). Fatty acid chain elongation in mitochondria uses acyl carrier protein (ACP) as an acyl group carrier, but the enzyme accepts both ACP and CoA thioesters as substrates in vitro. Displays a preference for medium-chain over short- and long-chain substrates. May provide the octanoyl chain used for lipoic acid biosynthesis, regulating protein lipoylation and mitochondrial respiratory activity particularly in Purkinje cells. Involved in iron homeostasis; affecting Fe-S cluster assembly and ceramide metabolism. Required for proper morphology and bioenergetic functions of mitochondria. Required for maintenance of neurons. In Mus musculus (Mouse), this protein is Enoyl-[acyl-carrier-protein] reductase, mitochondrial (Mecr).